A 302-amino-acid polypeptide reads, in one-letter code: MKDKIRLELEGIDIRFDEPLKEYTYTKVGGAVDYLAFPRNRYEIVRIVEFAKREGIPWQVLGNSSNIIVRDGGIRGFVIRMDKLNSVTVSGYTIEAEAGANLIETTKVALFHSLSGFEFACGIPGSIGGAVYMNAGAYGGEVAHILVSAQILTPAGYVETLDNRELRFGYRSSILQENGAIVLSAKFALRPGNHTVIQQEMARLTHLRELKQPLEYPSCGSVFKRPLGHFAGQLIMDAGLKGYRIGGVEVSEKHAGFMVNIENGTASDYENLIAHVIQVVEKSSGITLEREVRIIGDPADTL.

The FAD-binding PCMH-type domain occupies 27–192 (KVGGAVDYLA…LSAKFALRPG (166 aa)). Residue Arg171 is part of the active site. The active-site Proton donor is the Ser221. The active site involves Glu291.

It belongs to the MurB family. It depends on FAD as a cofactor.

The protein resides in the cytoplasm. The catalysed reaction is UDP-N-acetyl-alpha-D-muramate + NADP(+) = UDP-N-acetyl-3-O-(1-carboxyvinyl)-alpha-D-glucosamine + NADPH + H(+). Its pathway is cell wall biogenesis; peptidoglycan biosynthesis. Functionally, cell wall formation. The polypeptide is UDP-N-acetylenolpyruvoylglucosamine reductase (Streptococcus suis (strain 98HAH33)).